A 206-amino-acid polypeptide reads, in one-letter code: Uridine kinase (206 aa).

Residue 9–16 (GGSGSGKT) coordinates ATP.

This sequence belongs to the uridine kinase family.

The protein resides in the cytoplasm. The enzyme catalyses uridine + ATP = UMP + ADP + H(+). It carries out the reaction cytidine + ATP = CMP + ADP + H(+). It functions in the pathway pyrimidine metabolism; CTP biosynthesis via salvage pathway; CTP from cytidine: step 1/3. Its pathway is pyrimidine metabolism; UMP biosynthesis via salvage pathway; UMP from uridine: step 1/1. The chain is Uridine kinase from Borrelia garinii subsp. bavariensis (strain ATCC BAA-2496 / DSM 23469 / PBi) (Borreliella bavariensis).